We begin with the raw amino-acid sequence, 828 residues long: Glycerol-3-phosphate acyltransferase (828 aa).

The short motif at 309 to 314 (CHRSHI) is the HXXXXD motif element.

It belongs to the GPAT/DAPAT family.

Its subcellular location is the cell inner membrane. The catalysed reaction is sn-glycerol 3-phosphate + an acyl-CoA = a 1-acyl-sn-glycero-3-phosphate + CoA. The protein operates within phospholipid metabolism; CDP-diacylglycerol biosynthesis; CDP-diacylglycerol from sn-glycerol 3-phosphate: step 1/3. The sequence is that of Glycerol-3-phosphate acyltransferase from Pseudomonas putida (strain GB-1).